The sequence spans 130 residues: Small ribosomal subunit protein uS9 (130 aa).

It belongs to the universal ribosomal protein uS9 family.

This is Small ribosomal subunit protein uS9 from Xanthomonas axonopodis pv. citri (strain 306).